Reading from the N-terminus, the 74-residue chain is Antimicrobial peptide HsAp4 (74 aa).

The first 21 residues, 1-21 (MSRRRILILVLVTMLVKTMAG), serve as a signal peptide directing secretion. The propeptide occupies 22 to 33 (MESKWVETTYEI). Arginine amide is present on Arg-65. Positions 69 to 74 (AISEQT) are excised as a propeptide.

This sequence belongs to the non-disulfide-bridged peptide (NDBP) superfamily. Medium-length antimicrobial peptide (group 3) family. As to expression, expressed by the venom gland.

Its subcellular location is the secreted. It is found in the target cell membrane. In terms of biological role, possesses antimicrobial activity against both Gram-negative and Gram-positive bacteria, as well as against the fungus C.tropicalis. Also possesses a relatively high hemolytic activity. May act by disrupting the integrity of the bacterial cell membrane. This chain is Antimicrobial peptide HsAp4, found in Heterometrus spinifer (Asia giant forest scorpion).